Reading from the N-terminus, the 382-residue chain is Galactokinase (382 aa).

34–37 contributes to the substrate binding site; that stretch reads EHTD. Residue 124–130 coordinates ATP; the sequence is GAGLSSS. The Mg(2+) site is built by Ser130 and Glu162. The active-site Proton acceptor is Asp174. Tyr223 is a binding site for substrate.

Belongs to the GHMP kinase family. GalK subfamily.

It is found in the cytoplasm. The catalysed reaction is alpha-D-galactose + ATP = alpha-D-galactose 1-phosphate + ADP + H(+). The protein operates within carbohydrate metabolism; galactose metabolism. Catalyzes the transfer of the gamma-phosphate of ATP to D-galactose to form alpha-D-galactose-1-phosphate (Gal-1-P). The polypeptide is Galactokinase (Salmonella paratyphi A (strain ATCC 9150 / SARB42)).